The following is a 224-amino-acid chain: Peroxiredoxin-like 2A (224 aa).

A thioredoxin fold region spans residues 14–112; the sequence is MWSVGLGAVG…SKLGVPLYAV (99 aa). A non-standard amino acid (selenocysteine) is located at residue Sec85. The Redox-active role is filled by Cys88.

It belongs to the peroxiredoxin-like PRXL2 family. PRXL2A subfamily.

Its subcellular location is the cytoplasm. In terms of biological role, involved in redox regulation of the cell. Acts as an antioxidant. Inhibits TNFSF11-induced NFKB1 and JUN activation and osteoclast differentiation. May affect bone resorption and help to maintain bone mass. In Gallus gallus (Chicken), this protein is Peroxiredoxin-like 2A (PRXL2A).